The chain runs to 506 residues: UBX domain-containing protein 4 (506 aa).

The interval 1–199 (MLWFQGAIPA…PAEDLTVRVE (199 aa)) is interaction with UBQLN1. The Cytoplasmic portion of the chain corresponds to 1-411 (MLWFQGAIPA…VPSSSGDIWT (411 aa)). Composition is skewed to polar residues over residues 114–136 (SLKGETSVTNDKQSESSVSTPSA) and 177–189 (SLSQEPPGCSNQR). The disordered stretch occupies residues 114 to 193 (SLKGETSVTN…GCSNQRPAED (80 aa)). The UBX domain maps to 313 to 391 (DRSTIARIQF…ELAPSASVVL (79 aa)). The stretch at 412–432 (LLGTVLYPFLAIWRLISNFLF) is an intramembrane region. At 433 to 506 (SNPPPAQTSA…TWNGNSTQQM (74 aa)) the chain is on the cytoplasmic side. Positions 437 to 506 (PAQTSARATS…TWNGNSTQQM (70 aa)) are disordered. A compositionally biased stretch (low complexity) spans 444 to 456 (ATSTEPSNSASSS). The segment covering 457-489 (KSEKREPVRKRVLEKRGEDFKKEGKIYRLRTQD) has biased composition (basic and acidic residues). T487 carries the phosphothreonine modification. The segment covering 496-506 (NTWNGNSTQQM) has biased composition (polar residues).

In terms of assembly, directly interacts with VCP. Interacts with UBQLN1. Forms a complex with VCP and UBQLN1.

The protein localises to the endoplasmic reticulum membrane. It localises to the nucleus envelope. Involved in endoplasmic reticulum-associated protein degradation (ERAD). Acts as a platform to recruit both UBQLN1 and VCP to the ER during ERAD. The sequence is that of UBX domain-containing protein 4 (Ubxn4) from Rattus norvegicus (Rat).